The following is a 159-amino-acid chain: Phosphopantetheine adenylyltransferase (159 aa).

Thr10 serves as a coordination point for substrate. Residues 10–11 (TF) and His18 contribute to the ATP site. Residues Lys42, Met74, and Arg88 each contribute to the substrate site. Residues 89-91 (GLR), Glu99, and 124-130 (WSFISSS) each bind ATP.

The protein belongs to the bacterial CoaD family. In terms of assembly, homohexamer. Requires Mg(2+) as cofactor.

Its subcellular location is the cytoplasm. It carries out the reaction (R)-4'-phosphopantetheine + ATP + H(+) = 3'-dephospho-CoA + diphosphate. It participates in cofactor biosynthesis; coenzyme A biosynthesis; CoA from (R)-pantothenate: step 4/5. Its function is as follows. Reversibly transfers an adenylyl group from ATP to 4'-phosphopantetheine, yielding dephospho-CoA (dPCoA) and pyrophosphate. The protein is Phosphopantetheine adenylyltransferase of Yersinia pestis.